The following is a 197-amino-acid chain: uncharacterized protein (197 aa).

A run of 4 helical transmembrane segments spans residues 12–41 (LCIF…WVLF), 78–100 (LIQG…TALS), 120–142 (VGVF…FGCV), and 162–184 (IRFA…IFRS).

It localises to the cell membrane. This is an uncharacterized protein from Treponema pallidum (strain Nichols).